Here is a 226-residue protein sequence, read N- to C-terminus: Probable amino-acid ABC transporter permease protein YckA (226 aa).

One can recognise an ABC transmembrane type-1 domain in the interval 27–215 (IGYTLLISFV…AICSIAAVFQ (189 aa)). The next 5 membrane-spanning stretches (helical) occupy residues 31 to 51 (LLISFVSMFAGTVIGLFISLA), 73 to 93 (VPILVILFILYFGFPYIGIEF), 94 to 114 (SAVTAALIGFSLNSAAYIAEI), 160 to 180 (VLLDLIKASSLAAMITVPELL), and 194 to 214 (MTMYILTALIYWAICSIAAVF).

This sequence belongs to the binding-protein-dependent transport system permease family. HisMQ subfamily.

It is found in the cell membrane. Its function is as follows. Part of a binding-protein-dependent transport system. Probably responsible for the translocation of the substrate across the membrane. In Bacillus subtilis (strain 168), this protein is Probable amino-acid ABC transporter permease protein YckA (yckA).